Consider the following 1230-residue polypeptide: Soluble starch synthase 3, chloroplastic/amyloplastic (1230 aa).

The N-terminal 60 residues, 1–60 (MDVPFPLHRSLSCTSVSNAITHLKIKPILGFVSHGTTSLSVQSSSWRKDGMVTGVSFSIC), are a transit peptide targeting the chloroplast. The tract at residues 66 to 189 (RRRRKVSTPR…KDAVKLNKSK (124 aa)) is disordered. The span at 124 to 145 (VEARVETSDDDTKGVVRDHKFL) shows a compositional bias: basic and acidic residues. The span at 152–170 (NGSTKSISMSPVRVSSQFV) shows a compositional bias: polar residues. Over residues 177 to 189 (GDDKDAVKLNKSK) the composition is skewed to basic and acidic residues. K794 contacts ADP-alpha-D-glucose.

Belongs to the glycosyltransferase 1 family. Bacterial/plant glycogen synthase subfamily. Tuber, sink and source leaves.

The protein localises to the plastid. Its subcellular location is the chloroplast. The protein resides in the amyloplast. It catalyses the reaction [(1-&gt;4)-alpha-D-glucosyl](n) + ADP-alpha-D-glucose = [(1-&gt;4)-alpha-D-glucosyl](n+1) + ADP + H(+). It participates in glycan biosynthesis; starch biosynthesis. May account for most of the soluble starch synthase activity in the tubers. Contributes only a tiny percentage of the granule-bound activity, but may also contribute to the deposition of transient starch in chloroplasts of leaves. This chain is Soluble starch synthase 3, chloroplastic/amyloplastic (SS3), found in Solanum tuberosum (Potato).